A 319-amino-acid chain; its full sequence is Taste receptor type 2 member 14 (319 aa).

The Extracellular segment spans residues 1-7 (MDGVIKS). Residues 8–28 (IFTFILILEFIIGNLGNSFIV) traverse the membrane as a helical segment. The Cytoplasmic portion of the chain corresponds to 29-55 (LVNCIDWVKRRKISLVDQLLIALAISR). A helical transmembrane segment spans residues 56-76 (ISLVWSIFGSWCVSVVFPALF). Over 77-87 (ATEKLLRMLTN) the chain is Extracellular. Residues Thr-86 and Trp-89 each coordinate cholesterol. A helical transmembrane segment spans residues 88-108 (IWTVTNHFSVWLATILGTFYF). Residues 109–129 (LKIANFSNSIFLYLKWRVKKV) lie on the Cytoplasmic side of the membrane. The chain crosses the membrane as a helical span at residues 130-150 (VLVLLLVTLVLLFLNILLINI). Residues 151-184 (HINASINGYRGNMTCSSASCNFIRFSSAIALTST) are Extracellular-facing. 2 N-linked (GlcNAc...) asparagine glycosylation sites follow: Asn-153 and Asn-162. Position 180 (Ala-180) interacts with cholesterol. A helical transmembrane segment spans residues 185 to 205 (VFILIPFTLSLATFLLLSFSL). The Cytoplasmic portion of the chain corresponds to 206–232 (WKHRKKMQHTVKGYRDVSTKAHRGVMQ). A helical membrane pass occupies residues 233–253 (TVITFLLLYAVFFLTFFVSIW). At 254-261 (ISERLKEN) the chain is on the extracellular side. A helical transmembrane segment spans residues 262-282 (QIIILSEMMGLAYPSGHSCVL). Cholesterol is bound by residues Ile-265 and Glu-268. The Cytoplasmic portion of the chain corresponds to 283–317 (ILGNKKLRQASLSVLWWLRYRFKDGELSGHKEFRE).

The protein belongs to the G-protein coupled receptor T2R family. Core component of the TAS2R14-GNAI1 complex, consisting of TAS2R14, GNAI1, GNB1 and GNG2; within the complex interacts with GNAI1. Core component of the TAS2R14-GNAT3 complex, consisting of TAS2R14, GNAT3, GNB1 and GNG2; within the complex interacts with GNAT3. Core component of the TAS2R14-GNAS2 complex, consisting of TAS2R14, GNAS2, GNB1 and GNG2; within the complex interacts with GNAS2.

It is found in the membrane. It carries out the reaction Ca(2+)(in) = Ca(2+)(out). The enzyme catalyses 3',5'-cyclic AMP(in) = 3',5'-cyclic AMP(out). Basal activity is enhanced by binding to bitter tastants, such as flufenamic acid and aristolochic acid. Regulated by cholesterol in a concentration-dependent manner. Gustducin-linked G-protein coupled receptor that plays a role in the perception of bitterness. The activity of this receptor stimulates GNAT3, activating the gustducin G-protein pathway. Likely plays a role in sensing the chemical composition of the gastrointestinal content and other extra-oral tissues via the inhibitory G-protein pathways. This chain is Taste receptor type 2 member 14 (TAS2R14), found in Papio hamadryas (Hamadryas baboon).